The chain runs to 158 residues: Small ribosomal subunit protein uS15 (158 aa).

The segment covering 1 to 18 (MARMHARKRGKSGSKRPP) has biased composition (basic residues). The tract at residues 1–21 (MARMHARKRGKSGSKRPPRTA) is disordered.

The protein belongs to the universal ribosomal protein uS15 family. As to quaternary structure, part of the 30S ribosomal subunit.

This chain is Small ribosomal subunit protein uS15, found in Pyrococcus abyssi (strain GE5 / Orsay).